The sequence spans 1145 residues: Trafficking protein particle complex subunit 10 (1145 aa).

Belongs to the TMEM1 family. In terms of assembly, part of the multisubunit TRAPP (transport protein particle) complex. Interacts with Shal (via C-terminal dendritic targeting motif). In terms of tissue distribution, co-expressed with Shal in the nervous system.

It is found in the golgi apparatus. It localises to the cis-Golgi network. The protein resides in the cell projection. Its subcellular location is the dendrite. The protein localises to the perikaryon. In terms of biological role, may play a role in vesicular transport from endoplasmic reticulum to Golgi. Has a role in one of the several mechanisms underlying dendritic localization of Shal channels. This Drosophila melanogaster (Fruit fly) protein is Trafficking protein particle complex subunit 10 (SIDL).